The sequence spans 289 residues: Segregation and condensation protein A (289 aa).

Residues 1-18 show a composition bias toward basic and acidic residues; it reads MSEDRRSPTDEAPREGEL. Residues 1–24 form a disordered region; it reads MSEDRRSPTDEAPREGELPRSPGD.

This sequence belongs to the ScpA family. Component of the Structural Maintenance of Chromosome (SMC) condensin-like complex composed of ScpA, ScpB and the Smc homodimer. ScpA and ScpB bind to the head domain of Smc. The presence of the three proteins is required for the association of the complex with DNA.

The protein resides in the cytoplasm. Its function is as follows. A conditionally essential component of the chromosome segregation machinery. Participates in chromosomal partition during cell division. Important for positioning of ParB-parS complexes (ori of replication) and of the ter replication site, as well as for segration of the ParB-parS complex and thus chromosome segregation. May act via the formation of a condensin-like complex containing Smc, ScpA and ScpB that pulls DNA away from mid-cell into both cell halves. The sequence is that of Segregation and condensation protein A from Myxococcus xanthus (strain DK1622).